The sequence spans 712 residues: Aryl hydrocarbon receptor nuclear translocator 2 (712 aa).

Disordered stretches follow at residues Met-1–Val-20 and Met-35–Arg-74. Arg-42 is modified (omega-N-methylarginine). Basic and acidic residues predominate over residues Phe-63–Arg-73. Residues Phe-63–Met-116 enclose the bHLH domain. PAS domains are found at residues Thr-134–Arg-209 and Pro-323–Lys-393. A PAC domain is found at Ser-398–Leu-441. The interval Ala-573–Glu-712 is disordered. 2 stretches are compositionally biased toward low complexity: residues Ser-597–Ser-626 and Ser-653–Gln-675.

In terms of assembly, efficient DNA binding requires dimerization with another bHLH protein. Heterodimer with NPAS4 or SIM1. Heterodimer with the aryl hydrocarbon receptor (AHR) or the SIM1 protein. Interacts with TACC3.

The protein resides in the nucleus. Transcription factor that plays a role in the development of the hypothalamo-pituitary axis, postnatal brain growth, and visual and renal function. Specifically recognizes the xenobiotic response element (XRE). This chain is Aryl hydrocarbon receptor nuclear translocator 2 (Arnt2), found in Rattus norvegicus (Rat).